The primary structure comprises 819 residues: Molybdenum cofactor sulfurase (819 aa).

At lysine 271 the chain carries N6-(pyridoxal phosphate)lysine. Cysteine 430 is a catalytic residue. The MOSC domain maps to 650 to 817; the sequence is CKLLRYSSST…IGVGEEVNPD (168 aa).

Belongs to the class-V pyridoxal-phosphate-dependent aminotransferase family. MOCOS subfamily. Requires pyridoxal 5'-phosphate as cofactor. Ubiquitously expressed.

It carries out the reaction Mo-molybdopterin + L-cysteine + AH2 = thio-Mo-molybdopterin + L-alanine + A + H2O. It participates in cofactor biosynthesis; molybdopterin biosynthesis. Its function is as follows. Sulfurates the molybdenum cofactor. Sulfation of molybdenum is essential for xanthine dehydrogenase (XDH) and aldehyde oxidase (ADO) enzymes in which molybdenum cofactor is liganded by 1 oxygen and 1 sulfur atom in active form. Modulates cold stress- and osmotic stress-responsive gene expression by acting as key regulator of abscisic acid (ABA) biosynthesis. The polypeptide is Molybdenum cofactor sulfurase (ABA3) (Arabidopsis thaliana (Mouse-ear cress)).